The following is a 271-amino-acid chain: Probable redox regulatory protein SCO3349 (271 aa).

Disordered stretches follow at residues 1-21 (MPKT…KHIA) and 109-130 (AEGT…TRPF). The segment covering 7–21 (AKDEKSAKKDKKHIA) has biased composition (basic and acidic residues).

It belongs to the Rv0495c family.

Essential for maintaining intracellular redox homeostasis. This chain is Probable redox regulatory protein SCO3349, found in Streptomyces coelicolor (strain ATCC BAA-471 / A3(2) / M145).